A 241-amino-acid polypeptide reads, in one-letter code: Methylthioribulose-1-phosphate dehydratase (241 aa).

The segment covering 1 to 12 has biased composition (basic and acidic residues); sequence MSQEITQKDNND. A disordered region spans residues 1–22; sequence MSQEITQKDNNDHLVQSSDPDH. C101 provides a ligand contact to substrate. Positions 118 and 120 each coordinate Zn(2+). E147 serves as the catalytic Proton donor/acceptor. H203 is a binding site for Zn(2+).

It belongs to the aldolase class II family. MtnB subfamily. Zn(2+) serves as cofactor.

The protein resides in the cytoplasm. It catalyses the reaction 5-(methylsulfanyl)-D-ribulose 1-phosphate = 5-methylsulfanyl-2,3-dioxopentyl phosphate + H2O. The protein operates within amino-acid biosynthesis; L-methionine biosynthesis via salvage pathway; L-methionine from S-methyl-5-thio-alpha-D-ribose 1-phosphate: step 2/6. In terms of biological role, catalyzes the dehydration of methylthioribulose-1-phosphate (MTRu-1-P) into 2,3-diketo-5-methylthiopentyl-1-phosphate (DK-MTP-1-P). This chain is Methylthioribulose-1-phosphate dehydratase, found in Aspergillus terreus (strain NIH 2624 / FGSC A1156).